Here is an 847-residue protein sequence, read N- to C-terminus: Collagen alpha-1(I) chain (847 aa).

Residues Gly1 to Arg847 form a disordered region. The segment covering Pro20 to Met39 has biased composition (low complexity). A compositionally biased stretch (basic and acidic residues) spans Asn51–Glu65. Phosphoserine is present on Ser85. 2 stretches are compositionally biased toward low complexity: residues Asp93–Asn109 and Pro127–Ala145. Residues Pro147–Phe159 show a composition bias toward pro residues. 7 stretches are compositionally biased toward low complexity: residues Ala193–Pro208, Gln219–Lys228, Pro298–Thr314, Pro334–Pro343, Pro500–Ala543, Pro551–Ala599, and Ser628–Pro638. The residue at position 501 (Ser501) is a Phosphoserine. Residues Pro685 to Ala695 show a composition bias toward pro residues. Over residues Pro697–Ser712 the composition is skewed to low complexity. Over residues Ser731–Val746 the composition is skewed to pro residues. Low complexity predominate over residues Ala763–Pro777. Basic and acidic residues predominate over residues Arg778–Asp789. Positions Ser793–Pro838 are enriched in low complexity.

It belongs to the fibrillar collagen family. Trimers of one alpha 2(I) and two alpha 1(I) chains. Prolines at the third position of the tripeptide repeating unit (G-X-Y) are hydroxylated in some or all of the chains. In terms of tissue distribution, forms the fibrils of tendon, ligaments and bones. In bones, the fibrils are mineralized with calcium hydroxyapatite.

Its subcellular location is the secreted. It localises to the extracellular space. The protein localises to the extracellular matrix. Its function is as follows. Type I collagen is a member of group I collagen (fibrillar forming collagen). In Cyclopes didactylus (Silky anteater), this protein is Collagen alpha-1(I) chain.